Reading from the N-terminus, the 828-residue chain is Sarcolemmal membrane-associated protein (828 aa).

Positions 1-163 are necessary for targeting to centrosomes; the sequence is MPSALAIFTC…AANTPSMYSQ (163 aa). Residues 1 to 802 lie on the Cytoplasmic side of the membrane; the sequence is MPSALAIFTC…REKGNNKPWP (802 aa). The 58-residue stretch at 28-85 folds into the FHA domain; it reads IKIGRSVARCRPAQNNATFDCKVLSRNHALVWFDHKTGKFYLQDTKSSNGTFINSQRL. The residue at position 148 (S148) is a Phosphoserine. Coiled-coil stretches lie at residues 167–202 and 230–388; these read QLSQYLQEALHREQMLEQKLATLQRLLAITQEASDT and NQTE…QEKT. A helical; Anchor for type IV membrane protein transmembrane segment spans residues 339–359; that stretch reads KKELQHKIDEMEEKEQELQAK. Residues 433–446 show a composition bias toward basic and acidic residues; sequence KLSKENQTRAKESD. The interval 433 to 467 is disordered; that stretch reads KLSKENQTRAKESDFSDTLSPSKEKSSDDTTDAQM. Residues S448 and S452 each carry the phosphoserine modification. Residues 477–799 are a coiled coil; that stretch reads AKVSLLKDDL…KLLREKGNNK (323 aa). The helical; Anchor for type IV membrane protein transmembrane segment at 803–823 threads the bilayer; the sequence is WMPMLAALVAVTAIVLYVPGL. Topologically, residues 824 to 828 are extracellular; that stretch reads ARASP.

Belongs to the SLMAP family. As to quaternary structure, homodimer. Interacts with myosin. Interacts with SIKE1 and both associate with the STRIPAK core complex composed of PP2A catalytic and scaffolding subunits, the striatins (PP2A regulatory subunits), the striatin-associated proteins MOB4, STRIP1 and STRIP2, PDCD10 and members of the STE20 kinases, such as STK24 and STK26. Interacts (via FHA domain) with STK3 (when phosphorylated); the interaction associates STK3 with the STRIPAK complex.

Its subcellular location is the cell membrane. It localises to the sarcolemma. The protein localises to the cytoplasm. It is found in the myofibril. The protein resides in the sarcomere. Its subcellular location is the m line. It localises to the z line. The protein localises to the cytoskeleton. It is found in the microtubule organizing center. The protein resides in the centrosome. Its subcellular location is the endoplasmic reticulum membrane. It localises to the mitochondrion membrane. In terms of biological role, associates with the striatin-interacting phosphatase and kinase (STRIPAK) core complex, forming the extended (SIKE1:SLMAP)STRIPAK complex. The (SIKE1:SLMAP)STRIPAK complex dephosphorylates STK3 leading to the inhibition of Hippo signaling and the control of cell growth. May play a role during myoblast fusion. This Homo sapiens (Human) protein is Sarcolemmal membrane-associated protein.